The following is a 614-amino-acid chain: Cathepsin F (614 aa).

The signal sequence occupies residues 1–20 (MRLFAAATVALVLLLGQAAG). Residues 21 to 393 (EELAEERAGQ…AAVVPAYHGE (373 aa)) constitute a propeptide, activation peptide. The tract at residues 25 to 50 (EERAGQAQGDAESTESSETTTDQAVS) is disordered. Positions 29-45 (GQAQGDAESTESSETTT) are enriched in low complexity. Residue asparagine 151 is glycosylated (N-linked (GlcNAc...) asparagine). Cystine bridges form between cysteine 415/cysteine 456 and cysteine 449/cysteine 489. Cysteine 418 is an active-site residue. 2 N-linked (GlcNAc...) asparagine glycosylation sites follow: asparagine 492 and asparagine 510. Cysteine 548 and cysteine 602 are disulfide-bonded. Active-site residues include histidine 555 and asparagine 581.

Belongs to the peptidase C1 family.

The enzyme catalyses The recombinant enzyme cleaves synthetic substrates with Phe and Leu (better than Val) in P2, with high specificity constant (kcat/Km) comparable to that of cathepsin L.. Functionally, may have a role in autophagic cell death. This chain is Cathepsin F, found in Drosophila melanogaster (Fruit fly).